The chain runs to 268 residues: CCAAT/enhancer-binding protein delta (268 aa).

Disordered regions lie at residues 1–50 (MSAA…STTP), 98–132 (LELL…DAPG), and 152–223 (AAQP…QQKL). Residue Ser2 is modified to N-acetylserine. A Glycyl lysine isopeptide (Lys-Gly) (interchain with G-Cter in SUMO) cross-link involves residue Lys120. Residues 155-173 (PTPPTSPEPPRGSPGPSLA) show a composition bias toward pro residues. A compositionally biased stretch (basic and acidic residues) spans 177 to 201 (VREKGAGKRGPDRGSPEYRQRRERN). The bZIP domain maps to 191–254 (SPEYRQRRER…ASLRQFFKEL (64 aa)). The tract at residues 195 to 222 (RQRRERNNIAVRKSRDKAKRRNQEMQQK) is basic motif. Residues 226–254 (LSAENEKLHQRVEQLTRDLASLRQFFKEL) form a leucine-zipper region.

It belongs to the bZIP family. C/EBP subfamily. In terms of assembly, binds DNA as a homodimer and as a heterodimer. Can form stable heterodimers with CEBPA, CEBPB and CEBPE. Directly interacts with SPI1/PU.1; this interaction does not affect DNA-binding properties of each partner. Interacts with PRDM16. Ubiquitously expressed.

It localises to the nucleus. Functionally, transcription activator that recognizes two different DNA motifs: the CCAAT homology common to many promoters and the enhanced core homology common to many enhancers. Important transcription factor regulating the expression of genes involved in immune and inflammatory responses. Transcriptional activator that enhances IL6 transcription alone and as heterodimer with CEBPB. This Rattus norvegicus (Rat) protein is CCAAT/enhancer-binding protein delta (Cebpd).